Here is a 331-residue protein sequence, read N- to C-terminus: D-alanine--D-alanine ligase (331 aa).

One can recognise an ATP-grasp domain in the interval 112 to 314 (KRIWRSEGLP…YEDLCLRLLA (203 aa)). 138–193 (LQTLGAPMIVKPAREGSTIGLSKVHQAQQCASAYLLAARYDPEVLCEQFIAGDELT) serves as a coordination point for ATP. Mg(2+) is bound by residues Asp267, Glu281, and Asn283.

Belongs to the D-alanine--D-alanine ligase family. Requires Mg(2+) as cofactor. Mn(2+) is required as a cofactor.

Its subcellular location is the cytoplasm. The catalysed reaction is 2 D-alanine + ATP = D-alanyl-D-alanine + ADP + phosphate + H(+). It functions in the pathway cell wall biogenesis; peptidoglycan biosynthesis. Cell wall formation. This chain is D-alanine--D-alanine ligase, found in Verminephrobacter eiseniae (strain EF01-2).